The following is a 410-amino-acid chain: Transcription factor E2F4 (410 aa).

The segment at 1 to 20 is disordered; the sequence is MAEAGPQAPPPPGTPSRHEK. A2 is modified (N-acetylalanine). A DNA-binding region spans residues 16 to 85; sequence SRHEKSLGLL…KNSIQWKGVG (70 aa). A leucine-zipper region spans residues 43-65; that stretch reads LKLAADTLAVRQKRRIYDITNVL. The DEF box motif lies at 48–85; the sequence is DTLAVRQKRRIYDITNVLEGIGLIEKKSKNSIQWKGVG. Residues 86-181 are dimerization; sequence PGCNTREIAD…GLNGQKKYQI (96 aa). Disordered regions lie at residues 203 to 258 and 303 to 341; these read PPVA…GSTQ and SALL…DPTG. 2 stretches are compositionally biased toward low complexity: residues 231 to 252 and 308 to 324; these read PALA…TPTP and SSSS…SSSS. Residues 334 to 410 form a transactivation region; sequence PIKADPTGVL…DLFDVPVLKL (77 aa). S381 is modified (phosphoserine). The HCFC1-binding-motif (HBM) signature appears at 386-389; it reads DHDY. Residues 387–404 form an interaction with RBL1 and RBL2 region; the sequence is HDYIYNLDESEGVCDLFD.

Belongs to the E2F/DP family. In terms of assembly, component of the DRTF1/E2F transcription factor complex. Binds cooperatively with TFDP1/Dp-1 to E2F sites. The E2F4/TFDP1 dimer interacts preferentially with pocket protein RBL1, which inhibits the E2F transactivation domain. Lower affinity interaction has been found with retinoblastoma protein RB1. Interacts with TRRAP, which probably mediates its interaction with histone acetyltransferase complexes, leading to transcription activation. Interacts with HCFC1. Component of the DREAM complex (also named LINC complex) at least composed of E2F4, E2F5, LIN9, LIN37, LIN52, LIN54, MYBL1, MYBL2, RBL1, RBL2, RBBP4, TFDP1 and TFDP2. The complex exists in quiescent cells where it represses cell cycle-dependent genes. It dissociates in S phase when LIN9, LIN37, LIN52 and LIN54 form a subcomplex that binds to MYBL2. Interacts with PML. Interacts with CEBPA (when phosphorylated). In terms of processing, differentially phosphorylated in vivo.

Its subcellular location is the nucleus. In terms of biological role, transcription activator that binds DNA cooperatively with DP proteins through the E2 recognition site, 5'-TTTC[CG]CGC-3' found in the promoter region of a number of genes whose products are involved in cell cycle regulation or in DNA replication. The DRTF1/E2F complex functions in the control of cell-cycle progression from G1 to S phase. E2F4 binds with high affinity to RBL1 and RBL2. In some instances can also bind RB1. Specifically required for multiciliate cell differentiation: together with MCIDAS and E2F5, binds and activate genes required for centriole biogenesis. This chain is Transcription factor E2F4 (E2f4), found in Mus musculus (Mouse).